The chain runs to 241 residues: L-aspartate dehydrogenase (241 aa).

NAD(+) is bound by residues A109 and N164. Residue H193 is part of the active site.

The protein belongs to the L-aspartate dehydrogenase family.

The catalysed reaction is L-aspartate + NADP(+) + H2O = oxaloacetate + NH4(+) + NADPH + H(+). It carries out the reaction L-aspartate + NAD(+) + H2O = oxaloacetate + NH4(+) + NADH + H(+). It functions in the pathway cofactor biosynthesis; NAD(+) biosynthesis; iminoaspartate from L-aspartate (dehydrogenase route): step 1/1. Functionally, specifically catalyzes the NAD or NADP-dependent dehydrogenation of L-aspartate to iminoaspartate. This is L-aspartate dehydrogenase from Thermotoga sp. (strain RQ2).